The primary structure comprises 304 residues: N-acetylmuramic acid 6-phosphate etherase (304 aa).

Positions 57–220 (AVKGLSAGGR…STATMVGLGK (164 aa)) constitute an SIS domain. Residue glutamate 85 is the Proton donor of the active site. Glutamate 116 is an active-site residue.

The protein belongs to the GCKR-like family. MurNAc-6-P etherase subfamily. Homodimer.

The enzyme catalyses N-acetyl-D-muramate 6-phosphate + H2O = N-acetyl-D-glucosamine 6-phosphate + (R)-lactate. Its pathway is amino-sugar metabolism; N-acetylmuramate degradation. Functionally, specifically catalyzes the cleavage of the D-lactyl ether substituent of MurNAc 6-phosphate, producing GlcNAc 6-phosphate and D-lactate. The sequence is that of N-acetylmuramic acid 6-phosphate etherase from Cutibacterium acnes (strain DSM 16379 / KPA171202) (Propionibacterium acnes).